Consider the following 500-residue polypeptide: Glycerol kinase (500 aa).

Residue Thr-13 participates in ADP binding. Thr-13, Thr-14, and Ser-15 together coordinate ATP. A sn-glycerol 3-phosphate-binding site is contributed by Thr-13. Arg-17 is an ADP binding site. 4 residues coordinate sn-glycerol 3-phosphate: Arg-83, Glu-84, Tyr-135, and Asp-244. Residues Arg-83, Glu-84, Tyr-135, Asp-244, and Gln-245 each coordinate glycerol. Positions 266 and 309 each coordinate ADP. Thr-266, Gly-309, Gln-313, and Gly-410 together coordinate ATP. ADP contacts are provided by Gly-410 and Asn-414.

The protein belongs to the FGGY kinase family.

The enzyme catalyses glycerol + ATP = sn-glycerol 3-phosphate + ADP + H(+). It participates in polyol metabolism; glycerol degradation via glycerol kinase pathway; sn-glycerol 3-phosphate from glycerol: step 1/1. Inhibited by fructose 1,6-bisphosphate (FBP). Functionally, key enzyme in the regulation of glycerol uptake and metabolism. Catalyzes the phosphorylation of glycerol to yield sn-glycerol 3-phosphate. This is Glycerol kinase from Burkholderia ambifaria (strain ATCC BAA-244 / DSM 16087 / CCUG 44356 / LMG 19182 / AMMD) (Burkholderia cepacia (strain AMMD)).